Consider the following 189-residue polypeptide: dCTP deaminase (189 aa).

Residues 112 to 117, 136 to 138, Gln157, Tyr171, and Gln181 contribute to the dCTP site; these read KSTYAR and TLE. Glu138 functions as the Proton donor/acceptor in the catalytic mechanism.

It belongs to the dCTP deaminase family. Homotrimer.

It catalyses the reaction dCTP + H2O + H(+) = dUTP + NH4(+). The protein operates within pyrimidine metabolism; dUMP biosynthesis; dUMP from dCTP (dUTP route): step 1/2. Catalyzes the deamination of dCTP to dUTP. The sequence is that of dCTP deaminase from Burkholderia thailandensis (strain ATCC 700388 / DSM 13276 / CCUG 48851 / CIP 106301 / E264).